The chain runs to 471 residues: Tryptophanase (471 aa).

3 positions are modified to N6-acetyllysine: K5, K115, and K156. K270 is modified (N6-(pyridoxal phosphate)lysine). K450 is subject to N6-acetyllysine.

This sequence belongs to the beta-eliminating lyase family. As to quaternary structure, homotetramer. Pyridoxal 5'-phosphate serves as cofactor.

It carries out the reaction L-tryptophan + H2O = indole + pyruvate + NH4(+). The protein operates within amino-acid degradation; L-tryptophan degradation via pyruvate pathway; indole and pyruvate from L-tryptophan: step 1/1. The chain is Tryptophanase from Escherichia coli O139:H28 (strain E24377A / ETEC).